Reading from the N-terminus, the 270-residue chain is MIMTRKNILKAQRIVVKIGTSSLILPNGKINLSNIDELAFVLSDLNNKGYEVILVTSGAIGVGLNVLGMNKRPKGIADQQALASIGQVELMSLYTQMFRRYSQKVSQLLLTRDVTDFPTSRENPENALNALLALDIIPIINENDAIAVDEMDHQTKFGDNDKLGAIVSKLVHADLLIMLSDIDGLFDKNPTIYDDAKIFNEIHEITDELRQMAGGAGSRFGTGGMTSKLAAAQILFENDQEMVLTNGERIREIQQIIEGREIGTYFHQKF.

K17 provides a ligand contact to ATP. S57, D144, and N160 together coordinate substrate. Residues 180–181 (SD) and 222–228 (TGGMTSK) each bind ATP.

It belongs to the glutamate 5-kinase family.

It is found in the cytoplasm. It catalyses the reaction L-glutamate + ATP = L-glutamyl 5-phosphate + ADP. The protein operates within amino-acid biosynthesis; L-proline biosynthesis; L-glutamate 5-semialdehyde from L-glutamate: step 1/2. Functionally, catalyzes the transfer of a phosphate group to glutamate to form L-glutamate 5-phosphate. The sequence is that of Glutamate 5-kinase from Lactococcus lactis subsp. cremoris (strain SK11).